A 325-amino-acid polypeptide reads, in one-letter code: GMP reductase (325 aa).

C174 serves as the catalytic Thioimidate intermediate. 203-226 lines the NADP(+) pocket; the sequence is LIADGGIRTHGDIAKSIRFGASMV.

Belongs to the IMPDH/GMPR family. GuaC type 2 subfamily.

The enzyme catalyses IMP + NH4(+) + NADP(+) = GMP + NADPH + 2 H(+). Functionally, catalyzes the irreversible NADPH-dependent deamination of GMP to IMP. It functions in the conversion of nucleobase, nucleoside and nucleotide derivatives of G to A nucleotides, and in maintaining the intracellular balance of A and G nucleotides. This is GMP reductase from Staphylococcus aureus (strain JH9).